The chain runs to 257 residues: Hydroxyacylglutathione hydrolase (257 aa).

Positions 54, 56, 58, 59, 113, 137, and 175 each coordinate Zn(2+).

The protein belongs to the metallo-beta-lactamase superfamily. Glyoxalase II family. As to quaternary structure, monomer. It depends on Zn(2+) as a cofactor.

The enzyme catalyses an S-(2-hydroxyacyl)glutathione + H2O = a 2-hydroxy carboxylate + glutathione + H(+). The protein operates within secondary metabolite metabolism; methylglyoxal degradation; (R)-lactate from methylglyoxal: step 2/2. Thiolesterase that catalyzes the hydrolysis of S-D-lactoyl-glutathione to form glutathione and D-lactic acid. The polypeptide is Hydroxyacylglutathione hydrolase (Acaryochloris marina (strain MBIC 11017)).